The chain runs to 537 residues: Synaptotagmin-C (537 aa).

At 1–52 the chain is on the vesicular side; sequence MSGDGEDELCRNALALVNELCFSVRGNHNNEKCIEFSYLLRDRDRTRHIETD. A helical membrane pass occupies residues 53-78; it reads ISVSLLSVIVTFCGIVLLGVSLFVSW. The Cytoplasmic segment spans residues 79 to 537; it reads KLCWIPWRDK…TIVVESPHSV (459 aa). 2 disordered regions span residues 92–111 and 142–200; these read PQRR…HHSH and IKLS…EFGT. The span at 100–110 shows a compositional bias: basic residues; the sequence is HPHQHLHHHHS. Polar residues predominate over residues 143-174; sequence KLSQTSPDIPVDTSSGSKENNIPNAHSQQQVS. The phospholipid binding stretch occupies residues 228-477; that stretch reads EAKKHQKVNC…VIGMCRVGNA (250 aa). C2 domains lie at 236-357 and 368-501; these read NCGR…TIWR and DLGE…EQWH. 11 residues coordinate Ca(2+): Asp267, Asp273, Asp325, Phe326, Asp327, Ser330, Asp333, Asp399, Asp405, Asp459, and Asp461.

This sequence belongs to the synaptotagmin family. Homodimer or homotrimer (possible). The cofactor is Ca(2+).

It localises to the cytoplasmic vesicle. It is found in the secretory vesicle. The protein localises to the synaptic vesicle membrane. Its subcellular location is the synapse. Functionally, may have a regulatory role in the membrane interactions during trafficking of synaptic vesicles at the active zone of the synapse. It binds acidic phospholipids with a specificity that requires the presence of both an acidic head group and a diacyl backbone. The polypeptide is Synaptotagmin-C (P65-C) (Diplobatis ommata (Ocellated electric ray)).